Reading from the N-terminus, the 168-residue chain is Ribosome maturation factor RimM (168 aa).

The PRC barrel domain maps to 96-168; that stretch reads KDEYYWGDLV…RIRVAWQKDW (73 aa).

Belongs to the RimM family. As to quaternary structure, binds ribosomal protein uS19.

The protein localises to the cytoplasm. Its function is as follows. An accessory protein needed during the final step in the assembly of 30S ribosomal subunit, possibly for assembly of the head region. Essential for efficient processing of 16S rRNA. May be needed both before and after RbfA during the maturation of 16S rRNA. It has affinity for free ribosomal 30S subunits but not for 70S ribosomes. The chain is Ribosome maturation factor RimM from Azoarcus sp. (strain BH72).